The sequence spans 233 residues: 7-cyano-7-deazaguanine synthase (233 aa).

Leu8–Met18 provides a ligand contact to ATP. Residues Cys186, Cys194, Cys197, and Cys200 each contribute to the Zn(2+) site.

It belongs to the QueC family. In terms of assembly, homodimer. It depends on Zn(2+) as a cofactor.

It catalyses the reaction 7-carboxy-7-deazaguanine + NH4(+) + ATP = 7-cyano-7-deazaguanine + ADP + phosphate + H2O + H(+). It participates in purine metabolism; 7-cyano-7-deazaguanine biosynthesis. In terms of biological role, catalyzes the ATP-dependent conversion of 7-carboxy-7-deazaguanine (CDG) to 7-cyano-7-deazaguanine (preQ(0)). The protein is 7-cyano-7-deazaguanine synthase of Desulfitobacterium hafniense (strain DSM 10664 / DCB-2).